Here is a 331-residue protein sequence, read N- to C-terminus: Phosphoribosylformylglycinamidine cyclo-ligase (331 aa).

Belongs to the AIR synthase family.

The protein localises to the cytoplasm. The enzyme catalyses 2-formamido-N(1)-(5-O-phospho-beta-D-ribosyl)acetamidine + ATP = 5-amino-1-(5-phospho-beta-D-ribosyl)imidazole + ADP + phosphate + H(+). The protein operates within purine metabolism; IMP biosynthesis via de novo pathway; 5-amino-1-(5-phospho-D-ribosyl)imidazole from N(2)-formyl-N(1)-(5-phospho-D-ribosyl)glycinamide: step 2/2. This chain is Phosphoribosylformylglycinamidine cyclo-ligase, found in Clostridium botulinum (strain 657 / Type Ba4).